Here is a 380-residue protein sequence, read N- to C-terminus: Cystathionine beta-lyase (380 aa).

K196 carries the N6-(pyridoxal phosphate)lysine modification.

Belongs to the trans-sulfuration enzymes family. The cofactor is pyridoxal 5'-phosphate.

The protein localises to the cytoplasm. It carries out the reaction L,L-cystathionine + H2O = L-homocysteine + pyruvate + NH4(+). It catalyses the reaction an S-substituted L-cysteine + H2O = a thiol + pyruvate + NH4(+). It participates in amino-acid biosynthesis; L-methionine biosynthesis via de novo pathway; L-homocysteine from L-cystathionine: step 1/1. The enzymatic degradation of amino acids in cheese is believed to generate aroma compounds and therefore to be essential for flavor development. Cystathionine beta-lyase (CBL) can convert cystathionine to homocysteine but is also able to catalyze an alpha, gamma elimination. With methionine as a substrate, it produces volatile sulfur compounds which are important for flavor formation in Gouda cheese. The chain is Cystathionine beta-lyase (metC) from Lactococcus lactis subsp. lactis (strain IL1403) (Streptococcus lactis).